The primary structure comprises 120 residues: Large ribosomal subunit protein bL19 (120 aa).

This sequence belongs to the bacterial ribosomal protein bL19 family.

This protein is located at the 30S-50S ribosomal subunit interface and may play a role in the structure and function of the aminoacyl-tRNA binding site. The polypeptide is Large ribosomal subunit protein bL19 (Rippkaea orientalis (strain PCC 8801 / RF-1) (Cyanothece sp. (strain PCC 8801))).